The sequence spans 397 residues: Tryptophan synthase beta chain (397 aa).

Lysine 87 bears the N6-(pyridoxal phosphate)lysine mark.

This sequence belongs to the TrpB family. In terms of assembly, tetramer of two alpha and two beta chains. Pyridoxal 5'-phosphate is required as a cofactor.

The catalysed reaction is (1S,2R)-1-C-(indol-3-yl)glycerol 3-phosphate + L-serine = D-glyceraldehyde 3-phosphate + L-tryptophan + H2O. Its pathway is amino-acid biosynthesis; L-tryptophan biosynthesis; L-tryptophan from chorismate: step 5/5. In terms of biological role, the beta subunit is responsible for the synthesis of L-tryptophan from indole and L-serine. In Escherichia coli O127:H6 (strain E2348/69 / EPEC), this protein is Tryptophan synthase beta chain.